A 440-amino-acid polypeptide reads, in one-letter code: 23S rRNA (uracil(1939)-C(5))-methyltransferase RlmD (440 aa).

One can recognise a TRAM domain in the interval 8–69; the sequence is PQKINKLQRE…RQFGLATTKK (62 aa). [4Fe-4S] cluster-binding residues include C82, C88, C91, and C169. 6 residues coordinate S-adenosyl-L-methionine: Q272, F301, N306, E322, D349, and D370. C396 functions as the Nucleophile in the catalytic mechanism.

This sequence belongs to the class I-like SAM-binding methyltransferase superfamily. RNA M5U methyltransferase family. RlmD subfamily.

It catalyses the reaction uridine(1939) in 23S rRNA + S-adenosyl-L-methionine = 5-methyluridine(1939) in 23S rRNA + S-adenosyl-L-homocysteine + H(+). Functionally, catalyzes the formation of 5-methyl-uridine at position 1939 (m5U1939) in 23S rRNA. In Mannheimia succiniciproducens (strain KCTC 0769BP / MBEL55E), this protein is 23S rRNA (uracil(1939)-C(5))-methyltransferase RlmD.